We begin with the raw amino-acid sequence, 183 residues long: Capsid protein (183 aa).

Residues 136–183 (NAPILSTLPETTVVRRRGRSPRRRTPSPRRRRSQSPRRRRSQSRESQC) are disordered. Over residues 149–176 (VRRRGRSPRRRTPSPRRRRSQSPRRRRS) the composition is skewed to basic residues. Phosphoserine; by host is present on residues serine 155, serine 162, and serine 170. The 1; half-length repeat unit spans residues 155-161 (SPRRRTP). Positions 155 to 177 (SPRRRTPSPRRRRSQSPRRRRSQ) are 3 X 8 AA repeats of S-P-R-R-R-[PR]-S-Q. Positions 158–175 (RRTPSPRRRRSQSPRRRR) match the Bipartite nuclear localization signal motif. Tandem repeats lie at residues 162–169 (SPRRRRSQ) and 170–177 (SPRRRRSQ). The tract at residues 177–183 (QSRESQC) is RNA binding.

Belongs to the orthohepadnavirus core antigen family. In terms of assembly, homodimerizes, then multimerizes. Interacts with cytosol exposed regions of viral L glycoprotein present in the reticulum-to-Golgi compartment. Interacts with human FLNB. Phosphorylated form interacts with host importin alpha; this interaction depends on the exposure of the NLS, which itself depends upon genome maturation and/or phosphorylation of the capsid protein. Interacts with host NUP153. Phosphorylated by host SRPK1, SRPK2, and maybe protein kinase C or GAPDH. Phosphorylation is critical for pregenomic RNA packaging. Protein kinase C phosphorylation is stimulated by HBx protein and may play a role in transport of the viral genome to the nucleus at the late step during the viral replication cycle.

It is found in the virion. It localises to the host cytoplasm. Functionally, self assembles to form an icosahedral capsid. Most capsids appear to be large particles with an icosahedral symmetry of T=4 and consist of 240 copies of capsid protein, though a fraction forms smaller T=3 particles consisting of 180 capsid proteins. Entering capsids are transported along microtubules to the nucleus. Phosphorylation of the capsid is thought to induce exposure of nuclear localization signal in the C-terminal portion of the capsid protein that allows binding to the nuclear pore complex via the importin (karyopherin-) alpha and beta. Capsids are imported in intact form through the nuclear pore into the nuclear basket, where it probably binds NUP153. Only capsids that contain the mature viral genome can release the viral DNA and capsid protein into the nucleoplasm. Immature capsids get stuck in the basket. Capsids encapsulate the pre-genomic RNA and the P protein. Pre-genomic RNA is reverse-transcribed into DNA while the capsid is still in the cytoplasm. The capsid can then either be directed to the nucleus, providing more genomes for transcription, or bud through the endoplasmic reticulum to provide new virions. This is Capsid protein from Homo sapiens (Human).